A 98-amino-acid chain; its full sequence is Putative pterin-4-alpha-carbinolamine dehydratase (98 aa).

The protein belongs to the pterin-4-alpha-carbinolamine dehydratase family.

It carries out the reaction (4aS,6R)-4a-hydroxy-L-erythro-5,6,7,8-tetrahydrobiopterin = (6R)-L-erythro-6,7-dihydrobiopterin + H2O. The protein is Putative pterin-4-alpha-carbinolamine dehydratase of Parasynechococcus marenigrum (strain WH8102).